We begin with the raw amino-acid sequence, 151 residues long: UPF0756 membrane protein Dred_1097 (151 aa).

The next 4 membrane-spanning stretches (helical) occupy residues 6 to 26, 52 to 72, 75 to 95, and 111 to 131; these read IILL…LATA, VGLI…NIVY, LVMK…TLAT, and LIFG…GIPI.

Belongs to the UPF0756 family.

The protein resides in the cell membrane. The polypeptide is UPF0756 membrane protein Dred_1097 (Desulforamulus reducens (strain ATCC BAA-1160 / DSM 100696 / MI-1) (Desulfotomaculum reducens)).